The primary structure comprises 306 residues: UDP-3-O-acyl-N-acetylglucosamine deacetylase (306 aa).

Residues His-79, His-239, and Asp-243 each coordinate Zn(2+). His-266 (proton donor) is an active-site residue.

Belongs to the LpxC family. Zn(2+) serves as cofactor.

The enzyme catalyses a UDP-3-O-[(3R)-3-hydroxyacyl]-N-acetyl-alpha-D-glucosamine + H2O = a UDP-3-O-[(3R)-3-hydroxyacyl]-alpha-D-glucosamine + acetate. It participates in glycolipid biosynthesis; lipid IV(A) biosynthesis; lipid IV(A) from (3R)-3-hydroxytetradecanoyl-[acyl-carrier-protein] and UDP-N-acetyl-alpha-D-glucosamine: step 2/6. Catalyzes the hydrolysis of UDP-3-O-myristoyl-N-acetylglucosamine to form UDP-3-O-myristoylglucosamine and acetate, the committed step in lipid A biosynthesis. This Haemophilus ducreyi (strain 35000HP / ATCC 700724) protein is UDP-3-O-acyl-N-acetylglucosamine deacetylase.